The following is a 482-amino-acid chain: Ribosomal protein S6 kinase beta-2 (482 aa).

The interval 1 to 26 is disordered; sequence MAAVFDLDLETEEGSEGEGEPELSPA. The segment covering 7 to 21 has biased composition (acidic residues); sequence LDLETEEGSEGEGEP. Ser-15 is subject to Phosphoserine. A Protein kinase domain is found at 67 to 328; the sequence is FELLRVLGKG…AADVQRHPFF (262 aa). ATP contacts are provided by residues 73 to 81 and Lys-99; that span reads LGKGGYGKV. The Proton acceptor role is filled by Asp-194. Positions 329 to 399 constitute an AGC-kinase C-terminal domain; sequence RHMNWDDLLA…VAPSVLDSIK (71 aa). The interval 407–482 is disordered; it reads KLRSPRRLNS…SKRGRGRPGR (76 aa). Phosphoserine occurs at positions 417 and 423. Residues 437–466 show a composition bias toward pro residues; the sequence is PSLPEPTELPLPPLLPPPPPSTTAPLPIRP. Positions 471 to 477 match the Nuclear localization signal motif; sequence KKSKRGR. A compositionally biased stretch (basic residues) spans 471–482; that stretch reads KKSKRGRGRPGR. The residue at position 473 (Ser-473) is a Phosphoserine; by PKC.

Belongs to the protein kinase superfamily. AGC Ser/Thr protein kinase family. S6 kinase subfamily. Phosphorylated and activated by MTOR. Phosphorylation by PKC within the NLS in response to mitogenic stimuli causes cytoplasmic retention.

The protein resides in the cytoplasm. The protein localises to the nucleus. It catalyses the reaction L-seryl-[protein] + ATP = O-phospho-L-seryl-[protein] + ADP + H(+). The enzyme catalyses L-threonyl-[protein] + ATP = O-phospho-L-threonyl-[protein] + ADP + H(+). Phosphorylates specifically ribosomal protein S6. Seems to act downstream of mTOR signaling in response to growth factors and nutrients to promote cell proliferation, cell growth and cell cycle progression in an alternative pathway regulated by MEAK7. This chain is Ribosomal protein S6 kinase beta-2 (RPS6KB2), found in Homo sapiens (Human).